The primary structure comprises 180 residues: Large ribosomal subunit protein uL5 (180 aa).

Belongs to the universal ribosomal protein uL5 family. As to quaternary structure, part of the 50S ribosomal subunit; part of the 5S rRNA/L5/L18/L25 subcomplex. Contacts the 5S rRNA and the P site tRNA. Forms a bridge to the 30S subunit in the 70S ribosome.

Functionally, this is one of the proteins that bind and probably mediate the attachment of the 5S RNA into the large ribosomal subunit, where it forms part of the central protuberance. In the 70S ribosome it contacts protein S13 of the 30S subunit (bridge B1b), connecting the 2 subunits; this bridge is implicated in subunit movement. Contacts the P site tRNA; the 5S rRNA and some of its associated proteins might help stabilize positioning of ribosome-bound tRNAs. The polypeptide is Large ribosomal subunit protein uL5 (Lactobacillus johnsonii (strain CNCM I-12250 / La1 / NCC 533)).